The chain runs to 377 residues: Opsin-2 (377 aa).

Residues 1–57 (MNNQSENYYHGAQFEALKSAGAIEMLGDGLTGDDLAAIPEHWLSYPAPPASAHTALA) are Extracellular-facing. N-linked (GlcNAc...) asparagine glycosylation occurs at asparagine 3. The chain crosses the membrane as a helical span at residues 58–78 (LLYIFFTFAALVGNGMVIFIF). Over 79-89 (STTKSLRTSSN) the chain is Cytoplasmic. A helical transmembrane segment spans residues 90 to 110 (FLVLNLAILDFIMMAKAPIFI). Topologically, residues 111–126 (YNSAMRGFAVGTVGCQ) are extracellular. Cysteines 125 and 202 form a disulfide. A helical membrane pass occupies residues 127-146 (IFALMGAYSGIGAGMTNACI). The Cytoplasmic segment spans residues 147–166 (AYDRHSTITRPLDGRLSEGK). A helical transmembrane segment spans residues 167 to 187 (VLLMVAFVWIYSTPWALLPLL). Over 188–214 (KIWGRYVPEGYLTSCSFDYLTNTFDTK) the chain is Extracellular. A helical membrane pass occupies residues 215–235 (LFVACIFTCSYVFPMSLIIYF). Residues 236 to 283 (YSGIVKQVFAHEAALREQAKKMNVESLRANQGGSSESAEIRIAKAALT) lie on the Cytoplasmic side of the membrane. The helical transmembrane segment at 284-304 (VCFLFVASWTPYGVMALIGAF) threads the bilayer. Residues 305-314 (GNQQLLTPGV) lie on the Extracellular side of the membrane. The helical transmembrane segment at 315-335 (TMIPAVACKAVACISPWVYAI) threads the bilayer. The Cytoplasmic segment spans residues 336-377 (RHPMYRQELQRRMPWLQIDEPDDTVSTATSNTTNSAPPAATA). The interval 355–377 (EPDDTVSTATSNTTNSAPPAATA) is disordered. Low complexity predominate over residues 361–377 (STATSNTTNSAPPAATA).

Belongs to the G-protein coupled receptor 1 family. Opsin subfamily. In the retina, expression is essentially uniformly distributed, but a higher level is seen in the dorsal region of the retina and in the dorsal rim retinulae.

Its subcellular location is the membrane. Functionally, visual pigments are the light-absorbing molecules that mediate vision. They consist of an apoprotein, opsin, covalently linked to cis-retinal. May play a role in photoperiodic photoreception. The chain is Opsin-2 (OP2) from Manduca sexta (Tobacco hawkmoth).